Here is a 481-residue protein sequence, read N- to C-terminus: ATP synthase subunit beta (481 aa).

167 to 174 (GGAGVGKT) lines the ATP pocket.

The protein belongs to the ATPase alpha/beta chains family. As to quaternary structure, F-type ATPases have 2 components, CF(1) - the catalytic core - and CF(0) - the membrane proton channel. CF(1) has five subunits: alpha(3), beta(3), gamma(1), delta(1), epsilon(1). CF(0) has three main subunits: a(1), b(2) and c(9-12). The alpha and beta chains form an alternating ring which encloses part of the gamma chain. CF(1) is attached to CF(0) by a central stalk formed by the gamma and epsilon chains, while a peripheral stalk is formed by the delta and b chains.

Its subcellular location is the cell membrane. The enzyme catalyses ATP + H2O + 4 H(+)(in) = ADP + phosphate + 5 H(+)(out). Its function is as follows. Produces ATP from ADP in the presence of a proton gradient across the membrane. The catalytic sites are hosted primarily by the beta subunits. The polypeptide is ATP synthase subunit beta (Corynebacterium jeikeium (strain K411)).